Consider the following 488-residue polypeptide: Putative sugar transporter ERD6-like 13 (488 aa).

The next 12 membrane-spanning stretches (helical) occupy residues 51–71 (LILL…GTAA), 89–109 (LAEF…GAAM), 116–138 (VFGR…LMIA), 151–171 (LFLG…IVEI), 182–202 (AINS…GSVI), 207–227 (LALI…FIPE), 291–311 (VGIG…TFYL), 324–344 (VGVM…IVIV), 353–373 (LTVA…SFLF), 390–410 (GVLV…WVMI), 423–445 (GTLC…NFLF), and 451–471 (GVFF…MKMV).

This sequence belongs to the major facilitator superfamily. Sugar transporter (TC 2.A.1.1) family.

It localises to the membrane. Sugar transporter. This chain is Putative sugar transporter ERD6-like 13, found in Arabidopsis thaliana (Mouse-ear cress).